Here is a 230-residue protein sequence, read N- to C-terminus: Response regulator MprA (230 aa).

Residues 4-118 enclose the Response regulatory domain; sequence RILVVDDDRA…ELLARMRALL (115 aa). Asp48 bears the 4-aspartylphosphate mark. Residues 129 to 227 constitute a DNA-binding region (ompR/PhoB-type); sequence SPALTFLDLT…VRGVGYVLRE (99 aa).

Post-translationally, phosphorylated and dephosphorylated by MprB.

It is found in the cytoplasm. Its function is as follows. Member of the two-component regulatory system MprB/MprA which contributes to maintaining a balance among several systems involved in stress resistance and is required for establishment and maintenance of persistent infection in the host. Functions as a transcriptional regulator that recognizes a 19-bp nucleotide motif comprizing two loosely conserved 8-bp direct DNA-binding motif repeats separated by a 3-bp spacer region. The polypeptide is Response regulator MprA (mprA) (Mycobacterium sp. (strain JLS)).